The following is a 397-amino-acid chain: 3-ketoacyl-CoA thiolase, mitochondrial (397 aa).

Residues 1–16 (MALLRGVFVVAAKRTP) constitute a mitochondrion; not cleaved transit peptide. At lysine 25 the chain carries N6-acetyllysine; alternate. Residue lysine 25 is modified to N6-succinyllysine; alternate. At lysine 45 the chain carries N6-succinyllysine. The active-site Acyl-thioester intermediate is cysteine 92. Threonine 119 carries the phosphothreonine modification. Serine 121 carries the phosphoserine modification. Tyrosine 127 is modified (phosphotyrosine). Threonine 136 bears the Phosphothreonine mark. Lysine 137 bears the N6-acetyllysine; alternate mark. An N6-succinyllysine; alternate modification is found at lysine 137. Serine 140 carries the phosphoserine modification. 4 positions are modified to N6-acetyllysine; alternate: lysine 143, lysine 171, lysine 191, and lysine 209. Residues lysine 143, lysine 171, lysine 191, and lysine 209 each carry the N6-succinyllysine; alternate modification. An N6-succinyllysine mark is found at lysine 211, lysine 212, and lysine 214. The CoA site is built by arginine 224 and threonine 227. Position 234 is an N6-acetyllysine; alternate (lysine 234). Lysine 234 is modified (N6-succinyllysine; alternate). An N6-succinyllysine modification is found at lysine 240. An N6-acetyllysine modification is found at lysine 241. Residue serine 251 participates in CoA binding. Residues lysine 269 and lysine 270 each carry the N6-acetyllysine modification. Lysine 305 is modified (N6-acetyllysine; alternate). N6-succinyllysine; alternate is present on lysine 305. The residue at position 310 (serine 310) is a Phosphoserine. Lysine 312 bears the N6-acetyllysine; alternate mark. Lysine 312 carries the post-translational modification N6-succinyllysine; alternate. Serine 333 bears the Phosphoserine mark. Lysine 340 and lysine 375 each carry N6-acetyllysine. Cysteine 382 (proton donor/acceptor) is an active-site residue.

The protein belongs to the thiolase-like superfamily. Thiolase family. Homotetramer. Interacts with BNIP3.

It localises to the mitochondrion. The enzyme catalyses an acyl-CoA + acetyl-CoA = a 3-oxoacyl-CoA + CoA. It carries out the reaction 2 acetyl-CoA = acetoacetyl-CoA + CoA. The catalysed reaction is acetyl-CoA + H2O = acetate + CoA + H(+). It catalyses the reaction propanoyl-CoA + H2O = propanoate + CoA + H(+). The enzyme catalyses butanoyl-CoA + H2O = butanoate + CoA + H(+). It carries out the reaction hexanoyl-CoA + H2O = hexanoate + CoA + H(+). The catalysed reaction is octanoyl-CoA + H2O = octanoate + CoA + H(+). It catalyses the reaction decanoyl-CoA + H2O = decanoate + CoA + H(+). The enzyme catalyses dodecanoyl-CoA + H2O = dodecanoate + CoA + H(+). It carries out the reaction tetradecanoyl-CoA + H2O = tetradecanoate + CoA + H(+). The catalysed reaction is hexadecanoyl-CoA + H2O = hexadecanoate + CoA + H(+). It functions in the pathway lipid metabolism; fatty acid beta-oxidation. In terms of biological role, in the production of energy from fats, this is one of the enzymes that catalyzes the last step of the mitochondrial beta-oxidation pathway, an aerobic process breaking down fatty acids into acetyl-CoA. Using free coenzyme A/CoA, catalyzes the thiolytic cleavage of medium- to long-chain unbranched 3-oxoacyl-CoAs into acetyl-CoA and a fatty acyl-CoA shortened by two carbon atoms. Also catalyzes the condensation of two acetyl-CoA molecules into acetoacetyl-CoA and could be involved in the production of ketone bodies. Also displays hydrolase activity on various fatty acyl-CoAs. Thereby, could be responsible for the production of acetate in a side reaction to beta-oxidation. Abolishes BNIP3-mediated apoptosis and mitochondrial damage. This is 3-ketoacyl-CoA thiolase, mitochondrial (ACAA2) from Homo sapiens (Human).